A 264-amino-acid polypeptide reads, in one-letter code: V-type proton ATPase subunit D (264 aa).

Over residues 214–230 the composition is skewed to basic and acidic residues; the sequence is RDNAETDAQMKAKKAEQ. Positions 214-264 are disordered; it reads RDNAETDAQMKAKKAEQQRLALADSENAEGEQTENTPADILAAEEDEDVIF. The segment covering 255 to 264 has biased composition (acidic residues); sequence AAEEDEDVIF.

This sequence belongs to the V-ATPase D subunit family. V-ATPase is a heteromultimeric enzyme composed of a peripheral catalytic V1 complex (components A to H) attached to an integral membrane V0 proton pore complex (components: a, c, c', c'', d, e, f and VOA1).

Its subcellular location is the vacuole membrane. Subunit of the V1 complex of vacuolar(H+)-ATPase (V-ATPase), a multisubunit enzyme composed of a peripheral complex (V1) that hydrolyzes ATP and a membrane integral complex (V0) that translocates protons. V-ATPase is responsible for acidifying and maintaining the pH of intracellular compartments. This Neurospora crassa (strain ATCC 24698 / 74-OR23-1A / CBS 708.71 / DSM 1257 / FGSC 987) protein is V-type proton ATPase subunit D (vma-8).